The following is a 331-amino-acid chain: PIN2/TERF1-interacting telomerase inhibitor 1 (331 aa).

3 disordered regions span residues 1-28, 156-175, and 197-331; these read MSMLAERRRKQKWAVDPRNTAWSNDDSK, AQDGCSNSTADEADTSLTTT, and SKSQ…KVSR. The G-patch domain maps to 26–72; it reads DSKFGQKMLEKMGWSKGKGLGAQEQGATEHIKVKVKNNHLGLGATNN. Phosphoserine is present on Ser233. The segment covering 236–246 has biased composition (basic residues); the sequence is HKAKRHKKKKR. Positions 247–261 are enriched in basic and acidic residues; the sequence is VEAERGPAAKKRDQV. A telomerase inhibitory domain (TID) region spans residues 254–328; it reads AAKKRDQVEL…DSAPVKKKKK (75 aa). Ser269, Ser274, and Ser277 each carry phosphoserine. The TBM motif lies at 291 to 301; it reads QDDVPKPRKRR. A compositionally biased stretch (basic residues) spans 297 to 306; the sequence is PRKRRAKKTL.

The protein belongs to the PINX1 family. In terms of assembly, interacts with MCRS1, TERT, TERF1, NCL/nucleolin, and the telomerase RNA.

It localises to the nucleus. Its subcellular location is the nucleolus. The protein localises to the chromosome. The protein resides in the telomere. It is found in the centromere. It localises to the kinetochore. Functionally, microtubule-binding protein essential for faithful chromosome segregation. Mediates TRF1 and TERT accumulation in nucleolus and enhances TRF1 binding to telomeres. Inhibits telomerase activity. May inhibit cell proliferation and act as tumor suppressor. This is PIN2/TERF1-interacting telomerase inhibitor 1 from Rattus norvegicus (Rat).